The chain runs to 122 residues: UPF0102 protein Cgl2031/cg2228 (122 aa).

Belongs to the UPF0102 family.

The chain is UPF0102 protein Cgl2031/cg2228 from Corynebacterium glutamicum (strain ATCC 13032 / DSM 20300 / JCM 1318 / BCRC 11384 / CCUG 27702 / LMG 3730 / NBRC 12168 / NCIMB 10025 / NRRL B-2784 / 534).